We begin with the raw amino-acid sequence, 149 residues long: UPF0179 protein Mbar_A0292 (149 aa).

The protein belongs to the UPF0179 family.

The polypeptide is UPF0179 protein Mbar_A0292 (Methanosarcina barkeri (strain Fusaro / DSM 804)).